The sequence spans 2351 residues: Coagulation factor VIII (2351 aa).

The first 19 residues, M1–S19, serve as a signal peptide directing secretion. Plastocyanin-like domains are found at residues A20–C198 and E206–C348. An F5/8 type A 1 domain is found at A20–C348. Residue N60 is glycosylated (N-linked (GlcNAc...) asparagine). C172 and C198 are disulfide-bonded. Residue N258 is glycosylated (N-linked (GlcNAc...) asparagine). Residues C267 and C348 are joined by a disulfide bond. At Y365 the chain carries Sulfotyrosine. 2 consecutive Plastocyanin-like domains span residues K399–C573 and N583–C730. In terms of domain architecture, F5/8 type A 2 spans K399 to C730. A disulfide bridge links C547 with C573. An N-linked (GlcNAc...) asparagine glycan is attached at N601. Cysteines 649 and 730 form a disulfide. 3 positions are modified to sulfotyrosine: Y737, Y738, and Y742. Residues S760–R1667 are b. N-linked (GlcNAc...) asparagine glycosylation is found at N776, N803, N847, and N919. Disordered regions lie at residues S906–M928 and F941–N961. N962, N982, N1020, N1024, N1074, N1085, N1204, N1274, N1278, N1301, N1319, N1431, and N1461 each carry an N-linked (GlcNAc...) asparagine glycan. Sulfotyrosine is present on residues Y1683 and Y1699. Plastocyanin-like domains are found at residues K1713 to C1877 and G1887 to C2040. The region spanning K1713–C2040 is the F5/8 type A 3 domain. A glycan (N-linked (GlcNAc...) asparagine) is linked at N1829. Cystine bridges form between C1851–C1877, C1918–C1922, C2040–C2188, and C2193–C2345. F5/8 type C domains lie at C2040–C2188 and C2193–C2345. N2137 is a glycosylation site (N-linked (GlcNAc...) asparagine).

This sequence belongs to the multicopper oxidase family. Interacts with VWF/vWF. vWF binding is essential for the stabilization of F8 in circulation. Sulfation on Tyr-1699 is essential for binding vWF. Post-translationally, proteolytically cleaved by cathepsin CTSG to produce a partially activated form.

The protein localises to the secreted. It is found in the extracellular space. Factor VIII, along with calcium and phospholipid, acts as a cofactor for F9/factor IXa when it converts F10/factor X to the activated form, factor Xa. In Homo sapiens (Human), this protein is Coagulation factor VIII (F8).